Consider the following 277-residue polypeptide: MAKRYFEVLNWASSFLEAQGKEGYAIHYVFLERKGWDKTQWLLHMQEEMPQEEEEQLKTDLAQLLTDYPAQYLLGQAEFYGHSFIVNEHTLIPRPETEELVERCLKANPDTPLTVVDVGTGTGAIAVSLKLARPNWRVIAIDLSEEALTVAKQNAQALGAGIEFYHGNGLQPVASEKIDLLISNPPYISEQEWYLMDASVRTYEPKTALFAENNGLALYQQLIHESQTMLKADGKIYFEIGFQQGAALQELLSAAYPQKTIKIEKDLSGNDRLAIAE.

Residues 119 to 123 (GTGTG), aspartate 142, and asparagine 184 contribute to the S-adenosyl-L-methionine site. 184–187 (NPPY) contributes to the substrate binding site.

It belongs to the protein N5-glutamine methyltransferase family. PrmC subfamily.

The catalysed reaction is L-glutaminyl-[peptide chain release factor] + S-adenosyl-L-methionine = N(5)-methyl-L-glutaminyl-[peptide chain release factor] + S-adenosyl-L-homocysteine + H(+). In terms of biological role, methylates the class 1 translation termination release factors RF1/PrfA and RF2/PrfB on the glutamine residue of the universally conserved GGQ motif. This Enterococcus faecalis (strain ATCC 700802 / V583) protein is Release factor glutamine methyltransferase.